Here is a 243-residue protein sequence, read N- to C-terminus: Probable transcriptional regulatory protein BH0025 (243 aa).

Belongs to the TACO1 family.

Its subcellular location is the cytoplasm. The chain is Probable transcriptional regulatory protein BH0025 from Borrelia hermsii (strain HS1 / DAH).